The chain runs to 842 residues: Phosphatidylethanolamine N-methyltransferase (842 aa).

The tract at residues 1–28 is disordered; the sequence is MIKERKPSKSRAPGKGHKQIPGVAKESQ. Over 1 to 60 the chain is Lumenal; that stretch reads MIKERKPSKSRAPGKGHKQIPGVAKESQPIARTRTGNVEFTPAKTHDMVRSLFDPTLKKS. The span at 8–18 shows a compositional bias: basic residues; it reads SKSRAPGKGHK. Residues 61–81 form a helical membrane-spanning segment; sequence FLECWISLAILSNVVLCYFMA. Residues 82–91 are Cytoplasmic-facing; the sequence is TKFGASFTKK. The chain crosses the membrane as a helical span at residues 92–112; the sequence is FFLWQYVFWRLCYNVGIGVVL. Residues 113-172 are Lumenal-facing; it reads HFQSNYETLTNFAKMRSLFSKKNQQWLARFCRFEIESKMPNTYCLEEYPEEFNVWLLFRQ. The helical transmembrane segment at 173 to 193 threads the bilayer; it reads FVDLILMQDFTTYILFVVLSI. The Cytoplasmic portion of the chain corresponds to 194–196; the sequence is PKT. Residues 197-217 form a helical membrane-spanning segment; it reads VLSSHTVSFALGVIMILFNVW. Residues 218–243 are Lumenal-facing; it reads VKVDAHRVVKDYAWYWGDFFFFQDSK. Residues 244–264 form a helical membrane-spanning segment; sequence LVFDGVFNVSPHPMYSIGYMG. The Cytoplasmic portion of the chain corresponds to 265–270; the sequence is YYGLSL. The chain crosses the membrane as a helical span at residues 271-291; sequence ISGDYKVLLVSIGGHLLQFLF. Residues 292-345 lie on the Lumenal side of the membrane; that stretch reads LKYCENPHIEKIYGSDAVENDNAHIDELLVKENPNYSKPLITKGLWFTNVDKLR. A helical transmembrane segment spans residues 346 to 366; the sequence is LTDYFTILTVASIVLFTFFLK. Over 367–370 the chain is Cytoplasmic; the sequence is PSTK. The helical transmembrane segment at 371–391 threads the bilayer; it reads ALFWATLVAKITTSLFISLVL. The Lumenal portion of the chain corresponds to 392-414; sequence HKQSTSKWFTRLFLKNGYTQVHS. A helical membrane pass occupies residues 415-435; it reads FYQWQFLYNYCLTVSYTLLIL. The Cytoplasmic segment spans residues 436–468; the sequence is QTWSQFRHLESRNYTQIIFGFLLCWLQKWCDDE. Residues 469–489 form a helical membrane-spanning segment; the sequence is ILTAISEFGWFYGDFFLTNYI. Over 490-514 the chain is Lumenal; the sequence is SSRKLNSRGIYRYLSNPERFLGVAG. Residues 515–535 form a helical membrane-spanning segment; the sequence is CWGAVLITHFSPYNLILAALW. At 536–842 the chain is on the cytoplasmic side; it reads TAANIALVKL…EIKAVLENLE (307 aa).

This sequence belongs to the class VI-like SAM-binding methyltransferase superfamily. CHO2 family.

Its subcellular location is the endoplasmic reticulum membrane. It carries out the reaction a 1,2-diacyl-sn-glycero-3-phosphoethanolamine + S-adenosyl-L-methionine = a 1,2-diacyl-sn-glycero-3-phospho-N-methylethanolamine + S-adenosyl-L-homocysteine + H(+). It participates in phospholipid metabolism; phosphatidylcholine biosynthesis. In terms of biological role, catalyzes the first step of the methylation pathway of phosphatidylcholine biosynthesis, the SAM-dependent methylation of phosphatidylethanolamine (PE) to phosphatidylmonomethylethanolamine (PMME). In Lachancea thermotolerans (strain ATCC 56472 / CBS 6340 / NRRL Y-8284) (Yeast), this protein is Phosphatidylethanolamine N-methyltransferase (CHO2).